Reading from the N-terminus, the 262-residue chain is Sperm microtubule inner protein 6 (262 aa).

Belongs to the SPMIP6 family. Microtubule inner protein component of sperm flagellar doublet microtubules. Interacts with alpha-tubulin. Expressed in testis. Strongly expressed in ciliated epithelial cells with lower levels in goblet cells (at protein level).

Its subcellular location is the cytoplasm. The protein resides in the cytoskeleton. It localises to the nucleus. The protein localises to the mitochondrion. It is found in the flagellum axoneme. Functionally, may participate in intramanchette transport and midpiece formation of the sperm tail. May play a potential role in somatic cell proliferation. The polypeptide is Sperm microtubule inner protein 6 (Homo sapiens (Human)).